The primary structure comprises 122 residues: Large ribosomal subunit protein uL14 (122 aa).

Belongs to the universal ribosomal protein uL14 family. As to quaternary structure, part of the 50S ribosomal subunit. Forms a cluster with proteins L3 and L19. In the 70S ribosome, L14 and L19 interact and together make contacts with the 16S rRNA in bridges B5 and B8.

Its function is as follows. Binds to 23S rRNA. Forms part of two intersubunit bridges in the 70S ribosome. This is Large ribosomal subunit protein uL14 from Leifsonia xyli subsp. xyli (strain CTCB07).